We begin with the raw amino-acid sequence, 104 residues long: MNLGFLVGVFGVLILSHAAYSTIQYRGLLKIMEEEFSRPPINVILELIIGLALCMWAALTFPGKFLSIHPDSDENRAVFLPDNSDFMIFNHRGRLFPPQIDMKF.

Topologically, residues 1–2 are cytoplasmic; it reads MN. A helical transmembrane segment spans residues 3 to 23; the sequence is LGFLVGVFGVLILSHAAYSTI. At 24–40 the chain is on the lumenal side; the sequence is QYRGLLKIMEEEFSRPP. A helical transmembrane segment spans residues 41 to 61; sequence INVILELIIGLALCMWAALTF. Over 62–104 the chain is Cytoplasmic; that stretch reads PGKFLSIHPDSDENRAVFLPDNSDFMIFNHRGRLFPPQIDMKF.

Belongs to the membrane magnesium transporter (TC 1.A.67) family. In terms of assembly, component of the ER membrane protein complex (EMC).

The protein resides in the endoplasmic reticulum membrane. Its subcellular location is the golgi apparatus membrane. The protein localises to the early endosome membrane. Mediates Mg(2+) transport. The polypeptide is Membrane magnesium transporter (Arabidopsis thaliana (Mouse-ear cress)).